Here is a 121-residue protein sequence, read N- to C-terminus: Large ribosomal subunit protein bL19 (121 aa).

This sequence belongs to the bacterial ribosomal protein bL19 family.

This protein is located at the 30S-50S ribosomal subunit interface and may play a role in the structure and function of the aminoacyl-tRNA binding site. This Mesomycoplasma hyopneumoniae (strain 7448) (Mycoplasma hyopneumoniae) protein is Large ribosomal subunit protein bL19.